Here is an 829-residue protein sequence, read N- to C-terminus: Cation/H(+) antiporter 14 (829 aa).

Helical transmembrane passes span 48-68 (YAMPLMLLQMSVIIITSRLLY), 77-97 (GMISAQVLAGIILGPSLFGQS), 117-137 (SNLGFFIHLFLLGLRIDASII), 145-165 (ILIGTASYALPFSLGNLTVLF), 180-200 (ISTVISLNAMTSFPVTTTVLA), 215-235 (NCSIVCEAFSWIVALVFRMFL), 240-260 (LASVWSFVWVTALILVIFFVC), 281-301 (IPFFPIIMVLLTISLTSEVLG), 329-349 (LEMFATSLMLPCFISISGLQT), 361-383 (IIEAVILITYGCKFLGTAAASAY), 392-412 (FSLALLMCCQGVIEIYTCVMW), and 425-445 (LLIITLLLVTGISRFLVVCLY). S827 bears the Phosphoserine mark.

This sequence belongs to the monovalent cation:proton antiporter 2 (CPA2) transporter (TC 2.A.37) family. CHX (TC 2.A.37.4) subfamily. In terms of tissue distribution, preferentially expressed in pollen but also detected in vegetative tissues like leaf trichomes and root vascular tissues.

The protein localises to the membrane. May operate as a cation/H(+) antiporter. The sequence is that of Cation/H(+) antiporter 14 (CHX14) from Arabidopsis thaliana (Mouse-ear cress).